A 357-amino-acid polypeptide reads, in one-letter code: Biotin synthase (357 aa).

Residues 1–27 form a disordered region; sequence MTTAETKPATETGENAGTTGTAGTAAT. Positions 9–27 are enriched in low complexity; it reads ATETGENAGTTGTAGTAAT. In terms of domain architecture, Radical SAM core spans 78 to 303; that stretch reads DAVEMEGIIS…RQLLRFAGGR (226 aa). Residues Cys-93, Cys-97, and Cys-100 each contribute to the [4Fe-4S] cluster site. [2Fe-2S] cluster contacts are provided by Cys-136, Cys-228, and Arg-298.

This sequence belongs to the radical SAM superfamily. Biotin synthase family. In terms of assembly, homodimer. Requires [4Fe-4S] cluster as cofactor. [2Fe-2S] cluster serves as cofactor.

The catalysed reaction is (4R,5S)-dethiobiotin + (sulfur carrier)-SH + 2 reduced [2Fe-2S]-[ferredoxin] + 2 S-adenosyl-L-methionine = (sulfur carrier)-H + biotin + 2 5'-deoxyadenosine + 2 L-methionine + 2 oxidized [2Fe-2S]-[ferredoxin]. It participates in cofactor biosynthesis; biotin biosynthesis; biotin from 7,8-diaminononanoate: step 2/2. Its function is as follows. Catalyzes the conversion of dethiobiotin (DTB) to biotin by the insertion of a sulfur atom into dethiobiotin via a radical-based mechanism. The sequence is that of Biotin synthase from Corynebacterium jeikeium (strain K411).